We begin with the raw amino-acid sequence, 143 residues long: Large ribosomal subunit protein uL11 (143 aa).

Belongs to the universal ribosomal protein uL11 family. In terms of assembly, part of the ribosomal stalk of the 50S ribosomal subunit. Interacts with L10 and the large rRNA to form the base of the stalk. L10 forms an elongated spine to which L12 dimers bind in a sequential fashion forming a multimeric L10(L12)X complex. One or more lysine residues are methylated.

In terms of biological role, forms part of the ribosomal stalk which helps the ribosome interact with GTP-bound translation factors. This is Large ribosomal subunit protein uL11 from Thiobacillus denitrificans (strain ATCC 25259 / T1).